The sequence spans 198 residues: Recombination protein RecR (198 aa).

The C4-type zinc-finger motif lies at 57–72 (CEKCNTFTEAQICEVC). The Toprim domain maps to 80-175 (TLLCVVETPA…AVTRLARGVP (96 aa)).

Belongs to the RecR family.

Functionally, may play a role in DNA repair. It seems to be involved in an RecBC-independent recombinational process of DNA repair. It may act with RecF and RecO. This Paraburkholderia xenovorans (strain LB400) protein is Recombination protein RecR.